A 465-amino-acid chain; its full sequence is ATP synthase subunit beta (465 aa).

153–160 (GGAGVGKT) is a binding site for ATP.

It belongs to the ATPase alpha/beta chains family. In terms of assembly, F-type ATPases have 2 components, CF(1) - the catalytic core - and CF(0) - the membrane proton channel. CF(1) has five subunits: alpha(3), beta(3), gamma(1), delta(1), epsilon(1). CF(0) has three main subunits: a(1), b(2) and c(9-12). The alpha and beta chains form an alternating ring which encloses part of the gamma chain. CF(1) is attached to CF(0) by a central stalk formed by the gamma and epsilon chains, while a peripheral stalk is formed by the delta and b chains.

The protein localises to the cell membrane. It catalyses the reaction ATP + H2O + 4 H(+)(in) = ADP + phosphate + 5 H(+)(out). Its function is as follows. Produces ATP from ADP in the presence of a proton gradient across the membrane. The catalytic sites are hosted primarily by the beta subunits. This chain is ATP synthase subunit beta, found in Clostridium perfringens (strain SM101 / Type A).